Here is a 398-residue protein sequence, read N- to C-terminus: Probable aminomethyltransferase (398 aa).

Belongs to the GcvT family. As to quaternary structure, the glycine cleavage system is composed of four proteins: P, T, L and H.

The catalysed reaction is N(6)-[(R)-S(8)-aminomethyldihydrolipoyl]-L-lysyl-[protein] + (6S)-5,6,7,8-tetrahydrofolate = N(6)-[(R)-dihydrolipoyl]-L-lysyl-[protein] + (6R)-5,10-methylene-5,6,7,8-tetrahydrofolate + NH4(+). Its function is as follows. The glycine cleavage system catalyzes the degradation of glycine. In Pyrococcus horikoshii (strain ATCC 700860 / DSM 12428 / JCM 9974 / NBRC 100139 / OT-3), this protein is Probable aminomethyltransferase.